A 398-amino-acid chain; its full sequence is Phosphoglycerate kinase (398 aa).

Substrate contacts are provided by residues 21–23 (DFN), R36, 59–62 (HLGR), R119, and R157. ATP-binding positions include K208, G296, E327, and 354 to 357 (GGDS).

This sequence belongs to the phosphoglycerate kinase family. In terms of assembly, monomer.

It localises to the cytoplasm. It carries out the reaction (2R)-3-phosphoglycerate + ATP = (2R)-3-phospho-glyceroyl phosphate + ADP. Its pathway is carbohydrate degradation; glycolysis; pyruvate from D-glyceraldehyde 3-phosphate: step 2/5. This chain is Phosphoglycerate kinase, found in Lactococcus lactis subsp. cremoris (strain MG1363).